The chain runs to 363 residues: Ferrochelatase (363 aa).

Positions 209 and 290 each coordinate Fe cation.

It belongs to the ferrochelatase family.

Its subcellular location is the cytoplasm. It carries out the reaction heme b + 2 H(+) = protoporphyrin IX + Fe(2+). It functions in the pathway porphyrin-containing compound metabolism; protoheme biosynthesis; protoheme from protoporphyrin-IX: step 1/1. Its function is as follows. Catalyzes the ferrous insertion into protoporphyrin IX. This is Ferrochelatase from Methylibium petroleiphilum (strain ATCC BAA-1232 / LMG 22953 / PM1).